The sequence spans 349 residues: Isopentenyl-diphosphate delta-isomerase (349 aa).

9 to 10 is a substrate binding site; it reads RK. FMN contacts are provided by residues 65–67, Ser-95, and Asn-124; that span reads AMT. Residue 95–97 participates in substrate binding; that stretch reads STH. Gln-154 provides a ligand contact to substrate. Glu-155 contacts Mg(2+). FMN contacts are provided by residues Lys-186, Ser-211, Thr-216, 262–264, and 283–284; these read GLR and SR.

Belongs to the IPP isomerase type 2 family. Homooctamer. Dimer of tetramers. Requires FMN as cofactor. It depends on NADPH as a cofactor. The cofactor is Mg(2+).

Its subcellular location is the cytoplasm. The catalysed reaction is isopentenyl diphosphate = dimethylallyl diphosphate. Its function is as follows. Involved in the biosynthesis of isoprenoids. Catalyzes the 1,3-allylic rearrangement of the homoallylic substrate isopentenyl (IPP) to its allylic isomer, dimethylallyl diphosphate (DMAPP). The sequence is that of Isopentenyl-diphosphate delta-isomerase from Staphylococcus aureus (strain JH1).